The primary structure comprises 626 residues: ATP-dependent RNA helicase cyt-19, mitochondrial (626 aa).

The Q motif motif lies at 74-103; it reads ADLAALGVHENVVRAITHGMGYENMTEVQS. Residues 106–297 form the Helicase ATP-binding domain; it reads ISPALKGKDI…RSYIDKNNFE (192 aa). 119–126 contributes to the ATP binding site; sequence AKTGTGKT. Residues 241–244 carry the DEAD box motif; that stretch reads DEAD. Residues 329-493 form the Helicase C-terminal domain; that stretch reads AMLELIEKAL…CASVNAADSG (165 aa). The tract at residues 569–626 is disordered; it reads LRVETREHSMRPMGSGPGHRRDFNSRGPRRQSDDPFENALHRAQDLDRRPTRRQQASF. Residues 578 to 626 form an RNA-binding region; sequence MRPMGSGPGHRRDFNSRGPRRQSDDPFENALHRAQDLDRRPTRRQQASF. Basic and acidic residues predominate over residues 607-617; sequence ALHRAQDLDRR.

Belongs to the DEAD box helicase family.

It localises to the mitochondrion matrix. It carries out the reaction ATP + H2O = ADP + phosphate + H(+). Its activity is regulated as follows. Activated by exposed helices in a group I intron RNA. Functionally, acts as an RNA chaperone to resolve non-native structures formed during RNA folding to promote mitochondrial group I, but also group II, intron splicing. Functions predominantly by disrupting accessible RNA secondary structure and depends on spontaneous openings in tightly packed RNAs to gain access to RNA helices. The protein is ATP-dependent RNA helicase cyt-19, mitochondrial of Neurospora crassa (strain ATCC 24698 / 74-OR23-1A / CBS 708.71 / DSM 1257 / FGSC 987).